We begin with the raw amino-acid sequence, 430 residues long: MKILLFVVLFFNVLVGIYSIDTTIFTVCLNCKDGGIIKNVTLANRCSYLICKDENVDQQDQLTRSFSVKKRLTNGYIFDVYKNNQCSTRSNAFEMTKALTCNGEWLELNSFIKVKCGELDPNSSPSPSPSPSPSPSPSPSPSPSPSPSPSPSPSPSPSPSPSPSPSPSPSSSLEESQTPSQTPTPTQTPTPTQTQTTTPTQTQTLTPTQTQTPSQTPTPSQTPKPTQTPTQTPTPSQTPSQTPSQTPSQTPSQTPTPTPSQTPTPTQTPSQTPTQTQTPTPTQTPISSRPMSISTEKPSSSEEVIQASSEFNESSSEDKKKDSESKSSQSESPSPSASASESESASESASASTSVSVSASPLPIMDSSSSDSEENVSPTPLHKRGTPPPPFIHHSSSNELLEKNSDGNSSCKNIPKYLLIMVSLFLYFLF.

A signal peptide spans 1 to 19 (MKILLFVVLFFNVLVGIYS). Asn39 carries an N-linked (GlcNAc...) asparagine glycan. Positions 119-408 (LDPNSSPSPS…ELLEKNSDGN (290 aa)) are disordered. The segment covering 124–168 (SPSPSPSPSPSPSPSPSPSPSPSPSPSPSPSPSPSPSPSPSPSPS) has biased composition (pro residues). 2 stretches are compositionally biased toward low complexity: residues 169–253 (PSSS…TPSQ) and 263–285 (PTPTQTPSQTPTQTQTPTPTQTP). Over residues 286–303 (ISSRPMSISTEKPSSSEE) the composition is skewed to polar residues. An N-linked (GlcNAc...) asparagine glycan is attached at Asn312. Residues 316–325 (SEDKKKDSES) are compositionally biased toward basic and acidic residues. Low complexity predominate over residues 326–370 (KSSQSESPSPSASASESESASESASASTSVSVSASPLPIMDSSSS). N-linked (GlcNAc...) asparagine glycosylation occurs at Asn408.

It localises to the secreted. This is an uncharacterized protein from Dictyostelium discoideum (Social amoeba).